The primary structure comprises 299 residues: Phosphoribosylaminoimidazole-succinocarboxamide synthase (299 aa).

The protein belongs to the SAICAR synthetase family.

The catalysed reaction is 5-amino-1-(5-phospho-D-ribosyl)imidazole-4-carboxylate + L-aspartate + ATP = (2S)-2-[5-amino-1-(5-phospho-beta-D-ribosyl)imidazole-4-carboxamido]succinate + ADP + phosphate + 2 H(+). It functions in the pathway purine metabolism; IMP biosynthesis via de novo pathway; 5-amino-1-(5-phospho-D-ribosyl)imidazole-4-carboxamide from 5-amino-1-(5-phospho-D-ribosyl)imidazole-4-carboxylate: step 1/2. In Desulfatibacillum aliphaticivorans, this protein is Phosphoribosylaminoimidazole-succinocarboxamide synthase.